The primary structure comprises 140 residues: Large ribosomal subunit protein bL19 (140 aa).

Over residues 113–126 (RIAERQDRTADGKI) the composition is skewed to basic and acidic residues. The disordered stretch occupies residues 113-140 (RIAERQDRTADGKIKKGGKSAPAPTAAE).

Belongs to the bacterial ribosomal protein bL19 family.

Functionally, this protein is located at the 30S-50S ribosomal subunit interface and may play a role in the structure and function of the aminoacyl-tRNA binding site. This is Large ribosomal subunit protein bL19 from Xanthobacter autotrophicus (strain ATCC BAA-1158 / Py2).